The chain runs to 106 residues: MMVTALQILFSLIRYVTETIRSVSVLFSDSEDEPDDEASSSDKDVSDATLPARTTYSIVIFLAGSVRRDKREMLSISQKGTLSPAMLPRPAYRGIEREDRGGVQSK.

Disordered regions lie at residues 27–47 (FSDS…DVSD) and 83–106 (SPAM…VQSK). Over residues 29 to 39 (DSEDEPDDEAS) the composition is skewed to acidic residues. Basic and acidic residues predominate over residues 94–106 (GIEREDRGGVQSK).

The protein resides in the mitochondrion. This is an uncharacterized protein from Arabidopsis thaliana (Mouse-ear cress).